The chain runs to 75 residues: Holin (75 aa).

A run of 2 helical transmembrane segments spans residues 16-36 (FAQAMIGALGAGATGLIGVDW) and 39-59 (ALSIAGFATVVSILTSLASGI).

Homomultimer.

The protein resides in the host cell inner membrane. Accumulates harmlessly in the cytoplasmic membrane until it reaches a critical concentration that triggers the formation of micron-scale pores (holes) causing host cell membrane disruption and endolysin escape into the periplasmic space. Determines the precise timing of host cell lysis. Participates with the endolysin protein in the sequential events which lead to the programmed host cell lysis releasing the mature viral particles from the host cell. In Lactococcus lactis subsp. cremoris (Streptococcus cremoris), this protein is Holin.